We begin with the raw amino-acid sequence, 520 residues long: Nonsense-mediated mRNA decay factor SMG9 (520 aa).

3 disordered regions span residues 1–94 (MSES…PAPL), 108–143 (KGPV…QRPT), and 341–360 (KPST…SDEG). Ser2 bears the N-acetylserine mark. Ser2, Ser4, Ser7, Ser32, and Ser53 each carry phosphoserine. The segment covering 36-53 (GRERDYIAPWERERRDAS) has biased composition (basic and acidic residues). 2 stretches are compositionally biased toward pro residues: residues 78 to 94 (QPPP…PAPL) and 122 to 133 (TAPPPPAAPAPP). Over residues 342–357 (PSTPSPSHESSSSSGS) the composition is skewed to low complexity. Position 451 is a phosphoserine (Ser451).

This sequence belongs to the SMG9 family. In terms of assembly, self-associates to form homodimers and forms heterodimers with SMG8; these assembly forms may represent SMG1C intermediate forms. Component of the SMG1C complex composed of SMG1, SMG8 and SMG9. Interacts with DHX34; the interaction is RNA-independent. Phosphorylated by SMG1.

Functionally, involved in nonsense-mediated decay (NMD) of mRNAs containing premature stop codons. Is recruited by release factors to stalled ribosomes together with SMG1 and SMG8 (forming the SMG1C protein kinase complex) and, in the SMG1C complex, is required for the efficient association between SMG1 and SMG8. Plays a role in brain, heart, and eye development. The sequence is that of Nonsense-mediated mRNA decay factor SMG9 from Homo sapiens (Human).